A 266-amino-acid polypeptide reads, in one-letter code: Apolipoprotein A-I (266 aa).

The first 18 residues, 1 to 18 (MKAVVLTLAVLFLTGSQA), serve as a signal peptide directing secretion. 2 consecutive repeat copies span residues 67 to 88 (LKLL…EQIG) and 89 to 110 (PVTQ…QEMS). The interval 67 to 266 (LKLLDNWDSL…DEAAKKLNTQ (200 aa)) is 10 X approximate tandem repeats. The residue at position 109 (Met-109) is a Methionine sulfoxide. The stretch at 111–121 (KDLEEVKQKVQ) is one 3; half-length repeat. Repeat copies occupy residues 122–143 (PYLD…QKVA), 144–165 (PLGT…EKLT), 166–187 (PLGE…AHLA), 188–209 (PYSD…EGGS), and 210–231 (ASLA…EKAK). The 9; half-length repeat unit spans residues 232–242 (PALEDLRQGLL). Repeat unit 10 spans residues 243–266 (PVLESFKVSLLAAVDEAAKKLNTQ).

The protein belongs to the apolipoprotein A1/A4/E family. As to quaternary structure, homodimer. Interacts with APOA1BP and CLU. Component of a sperm activating protein complex (SPAP), consisting of APOA1, an immunoglobulin heavy chain, an immunoglobulin light chain and albumin. Interacts with NDRG1. Interacts with SCGB3A2. Interacts with NAXE and YJEFN3. In terms of processing, glycosylated. Post-translationally, palmitoylated. Phosphorylation sites are present in the extracellular medium.

The protein localises to the secreted. In terms of biological role, participates in the reverse transport of cholesterol from tissues to the liver for excretion by promoting cholesterol efflux from tissues and by acting as a cofactor for the lecithin cholesterol acyltransferase (LCAT). As part of the SPAP complex, activates spermatozoa motility. The protein is Apolipoprotein A-I (APOA1) of Mustela putorius furo (European domestic ferret).